Reading from the N-terminus, the 588-residue chain is Proteasome-associated ATPase (588 aa).

Residues methionine 1–arginine 10 are compositionally biased toward basic and acidic residues. Residues methionine 1–glycine 23 are disordered. The stretch at arginine 47–proline 94 forms a coiled coil. Glycine 276–leucine 281 provides a ligand contact to ATP. Residues tyrosine 587–leucine 588 are docks into pockets in the proteasome alpha-ring.

The protein belongs to the AAA ATPase family. As to quaternary structure, homohexamer. Assembles into a hexameric ring structure that caps the 20S proteasome core. Strongly interacts with the prokaryotic ubiquitin-like protein Pup through a hydrophobic interface; the interacting region of ARC lies in its N-terminal coiled-coil domain. There is one Pup binding site per ARC hexamer ring. Upon ATP-binding, the C-terminus of ARC interacts with the alpha-rings of the proteasome core, possibly by binding to the intersubunit pockets.

It participates in protein degradation; proteasomal Pup-dependent pathway. Functionally, ATPase which is responsible for recognizing, binding, unfolding and translocation of pupylated proteins into the bacterial 20S proteasome core particle. May be essential for opening the gate of the 20S proteasome via an interaction with its C-terminus, thereby allowing substrate entry and access to the site of proteolysis. Thus, the C-termini of the proteasomal ATPase may function like a 'key in a lock' to induce gate opening and therefore regulate proteolysis. This chain is Proteasome-associated ATPase, found in Streptomyces coelicolor (strain ATCC BAA-471 / A3(2) / M145).